A 647-amino-acid polypeptide reads, in one-letter code: Chaperone protein DnaK (647 aa).

The residue at position 200 (Thr-200) is a Phosphothreonine; by autocatalysis. Low complexity predominate over residues 611–631 (AGEQGAAGAAGAGAQQQAQPQ). The segment at 611–647 (AGEQGAAGAAGAGAQQQAQPQDDNVVDAEFKEVNDKK) is disordered. Residues 638–647 (AEFKEVNDKK) are compositionally biased toward basic and acidic residues.

This sequence belongs to the heat shock protein 70 family.

In terms of biological role, acts as a chaperone. This Cupriavidus taiwanensis (strain DSM 17343 / BCRC 17206 / CCUG 44338 / CIP 107171 / LMG 19424 / R1) (Ralstonia taiwanensis (strain LMG 19424)) protein is Chaperone protein DnaK.